A 1687-amino-acid chain; its full sequence is Protein TOPAZ1 (1687 aa).

Disordered stretches follow at residues 1–132 (MRRP…PGFD), 596–632 (LSRS…GNLT), and 938–969 (ASEI…GDFS). A compositionally biased stretch (gly residues) spans 31–41 (GAAGGCGPEAG). Residues 80–113 (RRVEGRRGQVSPSDRRGLEAAKEAEFPLQTERHT) are compositionally biased toward basic and acidic residues. 2 stretches are compositionally biased toward polar residues: residues 598-622 (RSGS…SLTG) and 948-963 (ANTS…SENE).

Its subcellular location is the cytoplasm. It localises to the cytosol. Its function is as follows. Important for normal spermatogenesis and male fertility. Specifically required for progression to the post-meiotic stages of spermatocyte development. Seems to be necessary for normal expression levels of a number of testis-expressed gene transcripts, although its role in this process is unclear. The chain is Protein TOPAZ1 (TOPAZ1) from Macaca mulatta (Rhesus macaque).